Consider the following 360-residue polypeptide: Peptide chain release factor 1 (360 aa).

An N5-methylglutamine modification is found at glutamine 235.

It belongs to the prokaryotic/mitochondrial release factor family. Methylated by PrmC. Methylation increases the termination efficiency of RF1.

It localises to the cytoplasm. Peptide chain release factor 1 directs the termination of translation in response to the peptide chain termination codons UAG and UAA. The chain is Peptide chain release factor 1 from Paracidovorax citrulli (strain AAC00-1) (Acidovorax citrulli).